Consider the following 286-residue polypeptide: Expansin-B4 (286 aa).

Residues 1–24 form the signal peptide; sequence MGSLSSLAAAAVFLSLLAVGHCAA. N-linked (GlcNAc...) asparagine glycosylation is found at Asn-28 and Asn-44. One can recognise an Expansin-like EG45 domain in the interval 75 to 181; the sequence is GGACGFKHTN…TRVPCEFPGL (107 aa). Disulfide bonds link Cys-78–Cys-106, Cys-109–Cys-176, and Cys-114–Cys-120. An Expansin-like CBD domain is found at 194–281; sequence VYFAVLVEYE…NWRPNTFYRS (88 aa). An N-linked (GlcNAc...) asparagine glycan is attached at Asn-257.

It belongs to the expansin family. Expansin B subfamily. As to expression, expressed in internodes.

It localises to the secreted. The protein resides in the cell wall. It is found in the membrane. Functionally, may cause loosening and extension of plant cell walls by disrupting non-covalent bonding between cellulose microfibrils and matrix glucans. No enzymatic activity has been found. May be required for rapid internodal elongation in deepwater rice during submergence. The polypeptide is Expansin-B4 (EXPB4) (Oryza sativa subsp. japonica (Rice)).